We begin with the raw amino-acid sequence, 599 residues long: MNDKQKAKINKAYNKLLKKINKRYPDVSVVYARDHKNKVHALYQDPESGNIFSLEKRKQLASNYPLFELTSDNPISFTNNIVSLNAYDDKNNLVTVQYDQDNNTFYDQNGNVLDVSSYTDEKKVPLINYLSSTQTSQEQPTQQDYPSIDAGLPKIEVDDQPKAAQHTTLETESEPDVFELNDSLNQPQQPTENLGDDQFVEKEVPPTQQLHQDLVHQQPVQVDSGSQNHSFNNSPSLKPPLVNKPAKLVQPEVKHIPQVEVQPKPQIVEPKIEPKPEVKHVSHVEIQPKPEVKPVVDSVPEVKQPEVKHVPHVEVQPKPVVDLKPQRIEPRIESKPEVIKHIPQVEVQPKAQMVEPRIEPKPETKYIPQVESTPQVEVHHWKPEVKTEYQPQQPLPTSGLQIKVVPRSAALLQSKLDTGFQPRQVERTTDSDITVSVSSHASLLEKINALNHQRIMSDIALKSDNTIKSSNFSRFYPENEYVATKYSDPLYSDTNQSLTSDRFSLDFDYTPKSRVNNYTPLRSTNFQNNAISNYRFSRTPSSYYPLTRRPWRLTNISSYRSSFHSPTRLSSFRRTSLPFSSSYDGLRRYPSRSYWSKDF.

Positions 220 to 236 (VQVDSGSQNHSFNNSPS) are enriched in polar residues. Residues 220-241 (VQVDSGSQNHSFNNSPSLKPPL) form a disordered region.

Its subcellular location is the cell projection. It localises to the attachment organelle membrane. Its function is as follows. Component of the cytoskeleton-like structure which stabilizes the shape of the wall-less mycoplasma. This cytoskeleton-like network of accessory proteins containing HMW proteins 1 to 5 allows the proper anchoring of cytadhesin proteins in the mycoplasmal membrane at the attachment organelle. Essential for successful surface parasitism. In Mycoplasma genitalium (strain ATCC 33530 / DSM 19775 / NCTC 10195 / G37) (Mycoplasmoides genitalium), this protein is Cytadherence high molecular weight protein 3 (hmw3).